A 142-amino-acid chain; its full sequence is Hemoglobin A subunit alpha-1 (142 aa).

One can recognise a Globin domain in the interval 2–142 (VLTAGDKANV…VATALTSKYR (141 aa)). Residue histidine 59 participates in O2 binding. Histidine 88 provides a ligand contact to heme b.

The protein belongs to the globin family. In terms of assembly, tetramer of alpha-1, alpha-2 and two identical beta chains. Red blood cells.

Functionally, involved in oxygen transport from the lung to the various peripheral tissues. This Aldabrachelys gigantea (Aldabra giant tortoise) protein is Hemoglobin A subunit alpha-1.